The following is a 399-amino-acid chain: Rho GTPase-activating protein gacC (399 aa).

The span at Met1–Ser13 shows a compositional bias: basic and acidic residues. Residues Met1–Lys80 form a disordered region. Polar residues predominate over residues Asp14–Ser31. Over residues Ser61 to Val79 the composition is skewed to low complexity. Positions Val186–Phe375 constitute a Rho-GAP domain.

It is found in the cytoplasm. Rho GTPase-activating protein involved in the signal transduction pathway. This Dictyostelium discoideum (Social amoeba) protein is Rho GTPase-activating protein gacC (gacC).